Reading from the N-terminus, the 101-residue chain is CRISPR-associated endoribonuclease Cas2 (101 aa).

Residue Asp8 participates in Mg(2+) binding.

The protein belongs to the CRISPR-associated endoribonuclease Cas2 protein family. Homodimer, forms a heterotetramer with a Cas1 homodimer. The cofactor is Mg(2+).

Functionally, CRISPR (clustered regularly interspaced short palindromic repeat), is an adaptive immune system that provides protection against mobile genetic elements (viruses, transposable elements and conjugative plasmids). CRISPR clusters contain sequences complementary to antecedent mobile elements and target invading nucleic acids. CRISPR clusters are transcribed and processed into CRISPR RNA (crRNA). Functions as a ssRNA-specific endoribonuclease. Involved in the integration of spacer DNA into the CRISPR cassette. This Parvibaculum lavamentivorans (strain DS-1 / DSM 13023 / NCIMB 13966) protein is CRISPR-associated endoribonuclease Cas2.